A 240-amino-acid chain; its full sequence is Acyl-protein thioesterase 1 (240 aa).

Active-site charge relay system residues include S129, D183, and H219.

It belongs to the AB hydrolase superfamily. AB hydrolase 2 family.

The protein localises to the cytoplasm. Its subcellular location is the nucleus. It catalyses the reaction S-hexadecanoyl-L-cysteinyl-[protein] + H2O = L-cysteinyl-[protein] + hexadecanoate + H(+). Hydrolyzes fatty acids from S-acylated cysteine residues in proteins with a strong preference for palmitoylated G-alpha proteins over other acyl substrates. Mediates the deacylation of G-alpha proteins such as GPA1 in vivo, but has weak or no activity toward palmitoylated Ras proteins. Has weak lysophospholipase activity in vitro; however such activity may not exist in vivo. The sequence is that of Acyl-protein thioesterase 1 from Mycosarcoma maydis (Corn smut fungus).